The primary structure comprises 721 residues: Mitogen-activated protein kinase 6 (721 aa).

Residue methionine 1 forms a Peptide (Met-Gly) (interchain with G-Cter in ubiquitin) linkage. The 297-residue stretch at tyrosine 20–methionine 316 folds into the Protein kinase domain. ATP contacts are provided by residues leucine 26 to valine 34 and lysine 49. Residue aspartate 152 is the Proton acceptor of the active site. Residue serine 189 is modified to Phosphoserine; by PAK1, PAK2 and PAK3. The SEG motif signature appears at serine 189–glycine 191. Positions phenylalanine 332–glutamate 337 match the FRIEDE motif motif. Phosphoserine is present on residues serine 386, serine 452, serine 556, serine 558, serine 665, and serine 684. Residues alanine 701–serine 715 show a composition bias toward polar residues. The segment at alanine 701–asparagine 721 is disordered.

This sequence belongs to the protein kinase superfamily. CMGC Ser/Thr protein kinase family. MAP kinase subfamily. In terms of assembly, heterodimer with ERK4/MAPK4. Interacts with (via FRIEDE motif) MAPKAPK5. Interacts with UBE3A; this interaction may be indirect and mediated by HERC2, possibly via HERC2 interaction with NEURL4. Requires Mg(2+) as cofactor. Post-translationally, phosphorylated at Ser-189 by PAK1, PAK2 and PAK3 resulting in catalytic activation. Phosphorylated by MAPKAPK5 at other sites. Ubiquitination at Met-1 leads to degradation by the proteasome pathway. As to expression, highest expression in the skeletal muscle, followed by the brain. Also found in heart, placenta, lung, liver, pancreas, kidney and skin fibroblasts.

The protein resides in the cytoplasm. The protein localises to the nucleus. The catalysed reaction is L-seryl-[protein] + ATP = O-phospho-L-seryl-[protein] + ADP + H(+). It carries out the reaction L-threonyl-[protein] + ATP = O-phospho-L-threonyl-[protein] + ADP + H(+). Its activity is regulated as follows. Activated by phosphorylation at Ser-189. Functionally, atypical MAPK protein. Phosphorylates microtubule-associated protein 2 (MAP2) and MAPKAPK5. The precise role of the complex formed with MAPKAPK5 is still unclear, but the complex follows a complex set of phosphorylation events: upon interaction with atypical MAPKAPK5, ERK3/MAPK6 is phosphorylated at Ser-189 and then mediates phosphorylation and activation of MAPKAPK5, which in turn phosphorylates ERK3/MAPK6. May promote entry in the cell cycle. In Homo sapiens (Human), this protein is Mitogen-activated protein kinase 6 (MAPK6).